A 623-amino-acid chain; its full sequence is Glutathione import ATP-binding protein GsiA (623 aa).

ABC transporter domains lie at 15 to 269 (VSGL…QTLL) and 325 to 564 (LRSG…RKLM). ATP contacts are provided by residues 49 to 56 (GESGSGKS) and 357 to 364 (GESGSGKS).

Belongs to the ABC transporter superfamily. Glutathione importer (TC 3.A.1.5.11) family. The complex is composed of two ATP-binding proteins (GsiA), two transmembrane proteins (GsiC and GsiD) and a solute-binding protein (GsiB).

Its subcellular location is the cell inner membrane. The catalysed reaction is glutathione(out) + ATP + H2O = glutathione(in) + ADP + phosphate + H(+). In terms of biological role, part of the ABC transporter complex GsiABCD involved in glutathione import. Responsible for energy coupling to the transport system. The polypeptide is Glutathione import ATP-binding protein GsiA (Salmonella typhi).